We begin with the raw amino-acid sequence, 181 residues long: Regulator of G-protein signaling 5 (181 aa).

An RGS domain is found at 64–180 (SLDKLLQNNY…VRSEFYQEFI (117 aa)).

The protein localises to the cytoplasm. It localises to the membrane. In terms of biological role, inhibits signal transduction by increasing the GTPase activity of G protein alpha subunits thereby driving them into their inactive GDP-bound form. Binds to G(i)-alpha and G(o)-alpha, but not to G(s)-alpha. The sequence is that of Regulator of G-protein signaling 5 (RGS5) from Bos taurus (Bovine).